The sequence spans 429 residues: MALRVTRNTKLNTENKAKVSMAGAKAVPVTLAAASKPGLRPRTALGDIGNKVSEQAQARLPLKKELKTSVTGKVSAKIPPPKPLEKVPPVSEPEVELAETHEPEPVMDEKLSPEPILVDNPSPSPMETSGCAPAEEYLCQAFSDVILAVSDVDADDGADPNLCSEYVKDIYAYLRQLEEEQSVRPKYLLGREVTGNMRAILIDWLIQVQMKFRLLQETMYMTVSIIDRFMQDNCVPKKMLQLVGVTAMFIASKYEEMYPPEIGDFAFVTNNTYTKHQIRQMEMKILRVLNFSLGRPLPLHFLRRTSKIGEVDVEQHTLAKYLMELTLLDYDMVDFAPSQIAAGAFCLALKILDNGEWTPTLQHYLSYTEESLLPVMQHLAKNVVMVNHGLTKHMTIKNKYATSKHAKISTLAQLNCTLVQNLSKAVAKA.

The interval 71–114 is disordered; that stretch reads TGKVSAKIPPPKPLEKVPPVSEPEVELAETHEPEPVMDEKLSPE. Lysine 73 is modified (N6-acetyllysine). Residues 98–112 show a composition bias toward basic and acidic residues; that stretch reads AETHEPEPVMDEKLS. Serine 122 bears the Phosphoserine; by CDK1 mark. Position 124 is a phosphoserine (serine 124). Phosphoserine; by PLK1 is present on serine 129. Serine 143 carries the phosphoserine modification. Interaction with CDK2 stretches follow at residues 165 to 173 and 254 to 257; these read EYVKDIYAY and YEEM. The residue at position 317 (threonine 317) is a Phosphothreonine.

It belongs to the cyclin family. Cyclin AB subfamily. Interacts with the CDC2 protein kinase to form a serine/threonine kinase holoenzyme complex also known as maturation promoting factor (MPF). The cyclin subunit imparts substrate specificity to the complex. Binds HEI10. Interacts with catalytically active RALBP1 and CDC2 during mitosis to form an endocytotic complex during interphase. Interacts with CCNF; interaction is required for nuclear localization. Interacts with CDK5RAP3. Interacts with RFPL4A and UBE2A. Interacts with INCA1. Post-translationally, ubiquitinated by the SCF(NIPA) complex during interphase, leading to its destruction. Not ubiquitinated during G2/M phases. Phosphorylated by PLK1 at Ser-129 on centrosomes during prophase: phosphorylation by PLK1 does not cause nuclear import. Phosphorylation at Ser-143 was also reported to be mediated by PLK1 but Ser-129 seems to be the primary phosphorylation site.

The protein resides in the cytoplasm. It localises to the nucleus. It is found in the cytoskeleton. Its subcellular location is the microtubule organizing center. The protein localises to the centrosome. Essential for the control of the cell cycle at the G2/M (mitosis) transition. The polypeptide is G2/mitotic-specific cyclin-B1 (CCNB1) (Mesocricetus auratus (Golden hamster)).